The following is a 95-amino-acid chain: MSLEESEVKHIAHLARVAIEADDIPGYARNLSDILDFVEQMKDIDTSGVTPMAHPLDAVQRLREDEVTEPDQRERFQAIAPATEAGLYLVPRVIE.

The protein belongs to the GatC family. Heterotrimer of A, B and C subunits.

The enzyme catalyses L-glutamyl-tRNA(Gln) + L-glutamine + ATP + H2O = L-glutaminyl-tRNA(Gln) + L-glutamate + ADP + phosphate + H(+). It catalyses the reaction L-aspartyl-tRNA(Asn) + L-glutamine + ATP + H2O = L-asparaginyl-tRNA(Asn) + L-glutamate + ADP + phosphate + 2 H(+). In terms of biological role, allows the formation of correctly charged Asn-tRNA(Asn) or Gln-tRNA(Gln) through the transamidation of misacylated Asp-tRNA(Asn) or Glu-tRNA(Gln) in organisms which lack either or both of asparaginyl-tRNA or glutaminyl-tRNA synthetases. The reaction takes place in the presence of glutamine and ATP through an activated phospho-Asp-tRNA(Asn) or phospho-Glu-tRNA(Gln). The protein is Aspartyl/glutamyl-tRNA(Asn/Gln) amidotransferase subunit C of Alkalilimnicola ehrlichii (strain ATCC BAA-1101 / DSM 17681 / MLHE-1).